The following is a 273-amino-acid chain: 2,3,4,5-tetrahydropyridine-2,6-dicarboxylate N-succinyltransferase (273 aa).

Arg-104 and Asp-141 together coordinate substrate.

The protein belongs to the transferase hexapeptide repeat family. As to quaternary structure, homotrimer.

It is found in the cytoplasm. It catalyses the reaction (S)-2,3,4,5-tetrahydrodipicolinate + succinyl-CoA + H2O = (S)-2-succinylamino-6-oxoheptanedioate + CoA. It functions in the pathway amino-acid biosynthesis; L-lysine biosynthesis via DAP pathway; LL-2,6-diaminopimelate from (S)-tetrahydrodipicolinate (succinylase route): step 1/3. This Thioalkalivibrio sulfidiphilus (strain HL-EbGR7) protein is 2,3,4,5-tetrahydropyridine-2,6-dicarboxylate N-succinyltransferase.